The following is a 112-amino-acid chain: Evasin P1095 (112 aa).

The signal sequence occupies residues 1–23 (MELNAFTILQIAVFIAVGYHANT). 3 disulfide bridges follow: cysteine 48/cysteine 66, cysteine 52/cysteine 68, and cysteine 62/cysteine 79. Residue asparagine 51 is glycosylated (N-linked (GlcNAc...) asparagine). The interval 89 to 112 (GDPNDDPKINEATPQTQIFEKKRK) is disordered.

The protein localises to the secreted. Functionally, salivary chemokine-binding protein which binds to host chemokine CXCL8. In Ixodes ricinus (Common tick), this protein is Evasin P1095.